The primary structure comprises 693 residues: Elongation factor G 1 (693 aa).

Residues 4 to 281 (NKLRNIGISA…AVTRFLPSPH (278 aa)) form the tr-type G domain. GTP is bound by residues 13–20 (AHIDSGKT), 80–84 (DTPGH), and 134–137 (NKCD).

The protein belongs to the TRAFAC class translation factor GTPase superfamily. Classic translation factor GTPase family. EF-G/EF-2 subfamily.

It is found in the cytoplasm. Functionally, catalyzes the GTP-dependent ribosomal translocation step during translation elongation. During this step, the ribosome changes from the pre-translocational (PRE) to the post-translocational (POST) state as the newly formed A-site-bound peptidyl-tRNA and P-site-bound deacylated tRNA move to the P and E sites, respectively. Catalyzes the coordinated movement of the two tRNA molecules, the mRNA and conformational changes in the ribosome. This Borreliella burgdorferi (strain ATCC 35210 / DSM 4680 / CIP 102532 / B31) (Borrelia burgdorferi) protein is Elongation factor G 1 (fusA).